The sequence spans 284 residues: Tryptophan synthase alpha chain (284 aa).

Active-site proton acceptor residues include Glu59 and Asp70.

This sequence belongs to the TrpA family. In terms of assembly, tetramer of two alpha and two beta chains.

It catalyses the reaction (1S,2R)-1-C-(indol-3-yl)glycerol 3-phosphate + L-serine = D-glyceraldehyde 3-phosphate + L-tryptophan + H2O. It functions in the pathway amino-acid biosynthesis; L-tryptophan biosynthesis; L-tryptophan from chorismate: step 5/5. Its function is as follows. The alpha subunit is responsible for the aldol cleavage of indoleglycerol phosphate to indole and glyceraldehyde 3-phosphate. The chain is Tryptophan synthase alpha chain from Azospirillum brasilense.